Reading from the N-terminus, the 453-residue chain is 5-hydroxytryptamine receptor 1 (453 aa).

The Extracellular segment spans residues 1–36; it reads MKSLKSSTHDVPHPEHVVWAPPAYDEQHHLFFSHGT. The chain crosses the membrane as a helical span at residues 37-57; sequence VLIGIVGSLIITVAVVGNVLV. The Cytoplasmic portion of the chain corresponds to 58–74; that stretch reads CLAIFTEPILSHSKSNF. Residues 75-94 form a helical membrane-spanning segment; it reads FIVSLAVADLLLALLVMTFA. The Extracellular segment spans residues 95–110; that stretch reads LVNDMYGYWLFGETFC. Residues Cys-110 and Cys-225 are joined by a disulfide bond. Residues 111 to 133 traverse the membrane as a helical segment; that stretch reads FIWMSADVMCETASIFSICVISY. Residues 134-153 lie on the Cytoplasmic side of the membrane; that stretch reads DRLKQVQKPLHYEEFMTTTR. The chain crosses the membrane as a helical span at residues 154–175; it reads ALLIIACLWICSFVLSFVPIFL. The Extracellular portion of the chain corresponds to 176 to 223; sequence EWHELSVEEIKAIFKDNKTEKEKALEAHNFSSALNQTLGDNQKSNAKH. Residues 224–244 form a helical membrane-spanning segment; sequence VCLFDVHFTYSVIYSFICFYV. Topologically, residues 245-301 are cytoplasmic; that stretch reads PCTLMLTNYLRLFLIAQTHQVRIRSLQMTNPPQLRGQGASSYRNQGTQGSKAARTLT. A helical membrane pass occupies residues 302–322; it reads IITGTFLACWLPFFIINPIAA. At 323–331 the chain is on the extracellular side; it reads ADEHLIPLE. Residues 332–352 form a helical membrane-spanning segment; the sequence is CFMVTIWLGYFNSSVNPIIYG. Topologically, residues 353–453 are cytoplasmic; it reads TSNSKFRAAF…VFDSDTAFSS (101 aa). The tract at residues 397–428 is disordered; sequence DLSSSEHPSDACDTGRGKNSKGGDCATADPTK. A compositionally biased stretch (basic and acidic residues) spans 403-412; it reads HPSDACDTGR.

This sequence belongs to the G-protein coupled receptor 1 family. As to expression, reproductive system.

The protein localises to the cell membrane. Functionally, this is one of the several different receptors for 5-hydroxytryptamine (serotonin). 5-HT plays important roles in various behavioral and physiological processes in aplysia. These include feeding, locomotion, circadian rhythm, learning and memory, synaptic plasticity, and synaptic growth. This receptor is mediated by G proteins that stimulate phospholipase C. The chain is 5-hydroxytryptamine receptor 1 (5HTB1) from Aplysia californica (California sea hare).